The chain runs to 215 residues: Pyrrolidone-carboxylate peptidase (215 aa).

Residues Glu80, Cys143, and His167 contribute to the active site.

This sequence belongs to the peptidase C15 family. As to quaternary structure, homotetramer.

The protein resides in the cytoplasm. It carries out the reaction Release of an N-terminal pyroglutamyl group from a polypeptide, the second amino acid generally not being Pro.. Functionally, removes 5-oxoproline from various penultimate amino acid residues except L-proline. This is Pyrrolidone-carboxylate peptidase from Yersinia pseudotuberculosis serotype O:3 (strain YPIII).